The following is a 344-amino-acid chain: Methionine import ATP-binding protein MetN (344 aa).

Residues 2-241 form the ABC transporter domain; the sequence is IEIKSVNKVF…PKTELAHQFI (240 aa). Position 38 to 45 (38 to 45) interacts with ATP; sequence GSSGAGKS.

Belongs to the ABC transporter superfamily. Methionine importer (TC 3.A.1.24) family. As to quaternary structure, the complex is composed of two ATP-binding proteins (MetN), two transmembrane proteins (MetI) and a solute-binding protein (MetQ).

Its subcellular location is the cell inner membrane. The catalysed reaction is L-methionine(out) + ATP + H2O = L-methionine(in) + ADP + phosphate + H(+). It carries out the reaction D-methionine(out) + ATP + H2O = D-methionine(in) + ADP + phosphate + H(+). In terms of biological role, part of the ABC transporter complex MetNIQ involved in methionine import. Responsible for energy coupling to the transport system. This chain is Methionine import ATP-binding protein MetN, found in Vibrio cholerae serotype O1 (strain ATCC 39315 / El Tor Inaba N16961).